Consider the following 91-residue polypeptide: Putative defensin-like protein 221 (91 aa).

An N-terminal signal peptide occupies residues 1-19; that stretch reads MKTLFFFLTIAVLVSSCTS. 3 disulfides stabilise this stretch: C61/C78, C64/C83, and C68/C85.

It belongs to the DEFL family.

It localises to the secreted. In Arabidopsis thaliana (Mouse-ear cress), this protein is Putative defensin-like protein 221.